Here is a 141-residue protein sequence, read N- to C-terminus: VLSAADKTAIKHLTGSLRTNAEAWGAESLARMFATTPSTKTYFSKFTDFSANGKRVKAHGGKVLNAVADATDHLDNVAGHLDPLAVLHGTTLCVDPHNFPLLTQCILVTLAAHLTELKPETHCALDKFLCEVATALGSHYR.

Residues 1 to 141 (VLSAADKTAI…VATALGSHYR (141 aa)) enclose the Globin domain. His59 is an O2 binding site. His88 provides a ligand contact to heme b.

Belongs to the globin family. As to quaternary structure, heterotetramer of two alpha chains and two beta chains. Red blood cells.

Involved in oxygen transport from the lung to the various peripheral tissues. The polypeptide is Hemoglobin subunit alpha (HBA) (Squalus acanthias (Spiny dogfish)).